The following is a 156-amino-acid chain: Small ribosomal subunit protein uS7 (156 aa).

The protein belongs to the universal ribosomal protein uS7 family. In terms of assembly, part of the 30S ribosomal subunit. Contacts proteins S9 and S11.

In terms of biological role, one of the primary rRNA binding proteins, it binds directly to 16S rRNA where it nucleates assembly of the head domain of the 30S subunit. Is located at the subunit interface close to the decoding center, probably blocks exit of the E-site tRNA. In Staphylococcus aureus (strain USA300), this protein is Small ribosomal subunit protein uS7.